A 281-amino-acid chain; its full sequence is NADPH-dependent 7-cyano-7-deazaguanine reductase (281 aa).

81–83 (VES) serves as a coordination point for substrate. An NADPH-binding site is contributed by 83–84 (SK). The Thioimide intermediate role is filled by cysteine 188. Aspartate 195 serves as the catalytic Proton donor. Residue 227-228 (HE) participates in substrate binding. 256–257 (RG) is a binding site for NADPH.

The protein belongs to the GTP cyclohydrolase I family. QueF type 2 subfamily. As to quaternary structure, homodimer.

The protein localises to the cytoplasm. It catalyses the reaction 7-aminomethyl-7-carbaguanine + 2 NADP(+) = 7-cyano-7-deazaguanine + 2 NADPH + 3 H(+). Its pathway is tRNA modification; tRNA-queuosine biosynthesis. Functionally, catalyzes the NADPH-dependent reduction of 7-cyano-7-deazaguanine (preQ0) to 7-aminomethyl-7-deazaguanine (preQ1). The protein is NADPH-dependent 7-cyano-7-deazaguanine reductase of Acidovorax ebreus (strain TPSY) (Diaphorobacter sp. (strain TPSY)).